A 243-amino-acid chain; its full sequence is Membrane selenoprotein (243 aa).

The segment at 12-63 (GEDCEGGVUARPSSSSSSINNASDESTPLISKTNDEEKANIGISSTSNSPQE) is disordered. Residue Sec-20 is a non-standard amino acid, selenocysteine. 2 stretches are compositionally biased toward polar residues: residues 30 to 43 (INNASDESTPLISK) and 53 to 63 (GISSTSNSPQE). 4 helical membrane passes run 74-94 (ILTLLISIPALVGSUCWPVLI), 102-122 (VSAGSVELAHSLTFAITLSIL), 144-164 (IKFGPFYLTAIAVPLATFDIL), and 199-219 (VMGWFSAIVFTYTGYACLLVG). Residue Sec-88 is a non-standard amino acid, selenocysteine.

The protein resides in the membrane. In Dictyostelium discoideum (Social amoeba), this protein is Membrane selenoprotein (msp).